Here is a 431-residue protein sequence, read N- to C-terminus: Peptidase B (431 aa).

Positions 196 and 201 each coordinate Mn(2+). Lys-208 is an active-site residue. Asp-219, Asp-278, and Glu-280 together coordinate Mn(2+). Arg-282 is an active-site residue.

It belongs to the peptidase M17 family. Homohexamer. Mn(2+) is required as a cofactor.

It localises to the cytoplasm. The enzyme catalyses Release of an N-terminal amino acid, Xaa, from a peptide or arylamide. Xaa is preferably Glu or Asp but may be other amino acids, including Leu, Met, His, Cys and Gln.. In terms of biological role, probably plays an important role in intracellular peptide degradation. In Photorhabdus laumondii subsp. laumondii (strain DSM 15139 / CIP 105565 / TT01) (Photorhabdus luminescens subsp. laumondii), this protein is Peptidase B.